Consider the following 122-residue polypeptide: Large ribosomal subunit protein uL14c (122 aa).

This sequence belongs to the universal ribosomal protein uL14 family. As to quaternary structure, part of the 50S ribosomal subunit.

Its subcellular location is the plastid. The protein localises to the chloroplast. Its function is as follows. Binds to 23S rRNA. This is Large ribosomal subunit protein uL14c from Guizotia abyssinica (Niger).